Here is a 149-residue protein sequence, read N- to C-terminus: Basic phospholipase A2 homolog MitTx-beta (149 aa).

A signal peptide spans 1 to 30 (MDKMNPAHLLVLAAVCVSLLGASSIPPQAL). Cystine bridges form between Cys-41-Cys-100, Cys-55-Cys-148, Cys-57-Cys-73, Cys-72-Cys-130, Cys-79-Cys-123, Cys-89-Cys-116, and Cys-109-Cys-121.

It belongs to the phospholipase A2 family. Group I subfamily. K49 sub-subfamily. Heterodimer of an alpha (Kunitz-type) and a beta (phospholipase A2 homolog) chains; non-covalently-linked. Expressed by the venom gland.

The protein localises to the secreted. Heterodimer: MitTx, a heteromeric complex between Kunitz- and phospholipase-A2-like proteins, potently, persistently and selectively activates rat and chicken acid-sensing ion channel ASIC1. Both alternatively spliced rat isoforms ASIC1a and ASIC1b are activated, with a higher potency for ASIC1a (EC(50)=9.4 nM) vs ASIC1b (EC(50)=23 nM). The rat ASIC3 subtype is also sensitive to the heterodimer, but with a lower potency (EC(50)=830 nM). On rat ASIC2a, the toxin shows a very weak activation, but produces a remarkable potentiation (&gt;100-fold) of protons when the extracellular pH drops below neutrality. Moderate and weak activations are also observed on the heterotrimers Asic1a-Asic2a and Asic1a-Asic3 (expressed in CHO cells), respectively. The binding sites of the beta subunit of MitTx and the spider psalmotoxin-1 toxin overlap, explaining why these toxins are mutually exclusive. In vivo, the heterodimer elicits robust pain-related behavior in mice by activation of ASIC1 channels on capsaicin-sensitive nerve fibers. In terms of biological role, monomer: does not have phospholipase A2 activity but may maintain some lipid-binding character from its PLA2 lineage, which could aid in effecting neuronal depolarization. This Micrurus tener tener (Texas coral snake) protein is Basic phospholipase A2 homolog MitTx-beta.